A 321-amino-acid polypeptide reads, in one-letter code: Arginine-hydroxylase NDUFAF5, mitochondrial (321 aa).

The transit peptide at 1-25 (MNVSVKSLRGVSRTWRSFSSRQGMN) directs the protein to the mitochondrion.

This sequence belongs to the methyltransferase superfamily. Interacts with NDUFS7.

The protein resides in the mitochondrion inner membrane. In terms of biological role, arginine hydroxylase that mediates hydroxylation of 'Arg-111' of NDUFS7 and is involved in the assembly of mitochondrial NADH:ubiquinone oxidoreductase complex (complex I, MT-ND1) at early stages. May also have methyltransferase activity. This is Arginine-hydroxylase NDUFAF5, mitochondrial from Danio rerio (Zebrafish).